The sequence spans 115 residues: MVRVKRGNVAAKRRKKILKLAKGFKGAHSRLFRTANGQVMKALVYSYVGRKRRKRDFKRLWICRVNAASRSHGLNYSKLRNLMKQASLNINLKMLAQLVLFDKKAFSQIIDLVNK.

The protein belongs to the bacterial ribosomal protein bL20 family.

The protein resides in the plastid. Its subcellular location is the chloroplast. Its function is as follows. Binds directly to 23S ribosomal RNA and is necessary for the in vitro assembly process of the 50S ribosomal subunit. It is not involved in the protein synthesizing functions of that subunit. The sequence is that of Large ribosomal subunit protein bL20c from Emiliania huxleyi (Coccolithophore).